The following is a 322-amino-acid chain: 4-hydroxythreonine-4-phosphate dehydrogenase (322 aa).

A substrate-binding site is contributed by Thr132. Positions 160, 205, and 260 each coordinate a divalent metal cation. Positions 268, 277, and 286 each coordinate substrate.

It belongs to the PdxA family. As to quaternary structure, homodimer. Zn(2+) is required as a cofactor. It depends on Mg(2+) as a cofactor. The cofactor is Co(2+).

The protein resides in the cytoplasm. The catalysed reaction is 4-(phosphooxy)-L-threonine + NAD(+) = 3-amino-2-oxopropyl phosphate + CO2 + NADH. The protein operates within cofactor biosynthesis; pyridoxine 5'-phosphate biosynthesis; pyridoxine 5'-phosphate from D-erythrose 4-phosphate: step 4/5. Catalyzes the NAD(P)-dependent oxidation of 4-(phosphooxy)-L-threonine (HTP) into 2-amino-3-oxo-4-(phosphooxy)butyric acid which spontaneously decarboxylates to form 3-amino-2-oxopropyl phosphate (AHAP). The polypeptide is 4-hydroxythreonine-4-phosphate dehydrogenase (Xanthomonas campestris pv. campestris (strain B100)).